We begin with the raw amino-acid sequence, 123 residues long: UPF0102 protein SPO0400 (123 aa).

Belongs to the UPF0102 family.

In Ruegeria pomeroyi (strain ATCC 700808 / DSM 15171 / DSS-3) (Silicibacter pomeroyi), this protein is UPF0102 protein SPO0400.